A 1487-amino-acid chain; its full sequence is Chromosome partition protein MukB (1487 aa).

Residue 34–41 participates in ATP binding; the sequence is GGNGAGKS. Coiled coils occupy residues 297 to 426, 460 to 666, 781 to 806, 836 to 1111, and 1210 to 1266; these read SSRE…LEKA, ALKH…RLAS, RAAR…AKAA, EQAL…RTFV, and VEAI…LSNI. A flexible hinge region spans residues 667-784; the sequence is PGGSNDPRLK…VIPLFGRAAR (118 aa).

This sequence belongs to the SMC family. MukB subfamily. Homodimerization via its hinge domain. Binds to DNA via its C-terminal region. Interacts, and probably forms a ternary complex, with MukE and MukF via its C-terminal region. The complex formation is stimulated by calcium or magnesium. Interacts with tubulin-related protein FtsZ.

It is found in the cytoplasm. Its subcellular location is the nucleoid. In terms of biological role, plays a central role in chromosome condensation, segregation and cell cycle progression. Functions as a homodimer, which is essential for chromosome partition. Involved in negative DNA supercoiling in vivo, and by this means organize and compact chromosomes. May achieve or facilitate chromosome segregation by condensation DNA from both sides of a centrally located replisome during cell division. The sequence is that of Chromosome partition protein MukB from Vibrio vulnificus (strain YJ016).